The chain runs to 292 residues: Probable porphobilinogen deaminase (292 aa).

Cysteine 233 is subject to S-(dipyrrolylmethanemethyl)cysteine.

It belongs to the HMBS family. Dipyrromethane is required as a cofactor.

The catalysed reaction is 4 porphobilinogen + H2O = hydroxymethylbilane + 4 NH4(+). The protein operates within porphyrin-containing compound metabolism; protoporphyrin-IX biosynthesis; coproporphyrinogen-III from 5-aminolevulinate: step 2/4. Its function is as follows. Tetrapolymerization of the monopyrrole PBG into the hydroxymethylbilane pre-uroporphyrinogen in several discrete steps. This is Probable porphobilinogen deaminase (hemC) from Methanocaldococcus jannaschii (strain ATCC 43067 / DSM 2661 / JAL-1 / JCM 10045 / NBRC 100440) (Methanococcus jannaschii).